The sequence spans 346 residues: Ephrin-B1 (346 aa).

The first 27 residues, M1–P27, serve as a signal peptide directing secretion. Over L28 to K237 the chain is Extracellular. In terms of domain architecture, Ephrin RBD spans K30–V164. 2 cysteine pairs are disulfide-bonded: C64-C101 and C89-C153. N139 carries N-linked (GlcNAc...) asparagine glycosylation. Positions N169 to G228 are disordered. A compositionally biased stretch (basic and acidic residues) spans S205 to S218. Residues V238–L258 form a helical membrane-spanning segment. Residues T259–V346 lie on the Cytoplasmic side of the membrane. A Nuclear localization signal motif is present at residues V260–T273. Residues L263–T294 form an interaction with ZHX2 region. S281 and S287 each carry phosphoserine. Positions Y344–V346 match the PDZ-binding motif.

This sequence belongs to the ephrin family. As to quaternary structure, interacts (via PDZ-binding motif) with GRIP1 and GRIP2 (via PDZ domain 6). Interacts with TLE1. The intracellular domain peptide interacts with ZHX2; the interaction enhances ZHX2 transcriptional repression activity. In terms of processing, inducible phosphorylation of tyrosine residues in the cytoplasmic domain. Post-translationally, proteolytically processed. The ectodomain is cleaved, probably by a metalloprotease, to produce a membrane-tethered C-terminal fragment. This fragment is then further processed by the gamma-secretase complex to yield a soluble intracellular domain peptide which can translocate to the nucleus. The intracellular domain peptide is highly labile suggesting that it is targeted for degradation by the proteasome. As to expression, widely expressed. Detected in both neuronal and non-neuronal tissues. Seems to have particularly strong expression in retina, sciatic nerve, heart and spinal cord.

Its subcellular location is the cell membrane. The protein resides in the membrane raft. The protein localises to the nucleus. Functionally, cell surface transmembrane ligand for Eph receptors, a family of receptor tyrosine kinases which are crucial for migration, repulsion and adhesion during neuronal, vascular and epithelial development. Binding to Eph receptors residing on adjacent cells leads to contact-dependent bidirectional signaling into neighboring cells. Shows high affinity for the receptor tyrosine kinase EPHB1/ELK. Can also bind EPHB2 and EPHB3. Binds to, and induces collapse of, commissural axons/growth cones in vitro. May play a role in constraining the orientation of longitudinally projecting axons. The chain is Ephrin-B1 (EFNB1) from Homo sapiens (Human).